The primary structure comprises 312 residues: Olfactory receptor 8K3 (312 aa).

The Extracellular portion of the chain corresponds to 1 to 25 (MEQHNLTTVNEFILTGITDIAELQA). N-linked (GlcNAc...) asparagine glycosylation occurs at N5. A helical transmembrane segment spans residues 26-46 (PLFALFLMIYVISVMGNLGMI). The Cytoplasmic segment spans residues 47 to 54 (VLTKLDSR). The chain crosses the membrane as a helical span at residues 55–75 (LQTPMYFFLRHLAFMDLGYST). At 76–99 (TVGPKMLVNFVVDKNIISYYFCAT) the chain is on the extracellular side. C97 and C189 are disulfide-bonded. A helical transmembrane segment spans residues 100–120 (QLAFFLVFIGSELFILSAMSY). Residues 121–139 (DLYVAICNPLLYTVIMSRR) are Cytoplasmic-facing. Residues 140-160 (VCQVLVAIPYLYCTFISLLVT) form a helical membrane-spanning segment. Residues 161–197 (IKIFTLSFCGYNVISHFYCDSLPLLPLLCSNTHEIEL) are Extracellular-facing. The helical transmembrane segment at 198–217 (IILIFAAIDLISSLLIVLLS) threads the bilayer. At 218–236 (YLLILVAILRMNSAGRQKA) the chain is on the cytoplasmic side. Residues 237 to 257 (FSTCGAHLTVVIVFYGTLLFM) form a helical membrane-spanning segment. The Extracellular segment spans residues 258-270 (YVQPKSSHSFDTD). The helical transmembrane segment at 271–291 (KVASIFYTLVIPMLNPLIYSL) threads the bilayer. Residues 292–312 (RNKDVKYALRRTWNNLCNIFV) lie on the Cytoplasmic side of the membrane.

This sequence belongs to the G-protein coupled receptor 1 family.

Its subcellular location is the cell membrane. Functionally, odorant receptor. The chain is Olfactory receptor 8K3 (OR8K3) from Homo sapiens (Human).